We begin with the raw amino-acid sequence, 371 residues long: GDSL esterase/lipase At3g27950 (371 aa).

The N-terminal stretch at 1–23 (MAISKITLAIIVLLLGFTEKLSA) is a signal peptide. Residue S39 is the Nucleophile of the active site. N82, N143, N178, N194, and N315 each carry an N-linked (GlcNAc...) asparagine glycan. Residues D334 and H337 contribute to the active site.

It belongs to the 'GDSL' lipolytic enzyme family.

The protein resides in the secreted. In Arabidopsis thaliana (Mouse-ear cress), this protein is GDSL esterase/lipase At3g27950.